Reading from the N-terminus, the 132-residue chain is D-beta-hydroxybutyrate dehydrogenase, mitochondrial (132 aa).

Position 3–27 (leucine 3–phenylalanine 27) interacts with NAD(+). Lysine 17 is modified (N6-acetyllysine). Substrate is bound at residue serine 59. The active-site Proton acceptor is tyrosine 66. N6-acetyllysine is present on lysine 70. Serine 77 carries an O-linked (GlcNAc) serine glycan. Serine 104 is subject to Phosphoserine.

This sequence belongs to the short-chain dehydrogenases/reductases (SDR) family. Homotetramer.

It localises to the mitochondrion inner membrane. The protein localises to the mitochondrion matrix. The catalysed reaction is (R)-3-hydroxybutanoate + NAD(+) = acetoacetate + NADH + H(+). Its activity is regulated as follows. Requires phosphatidylcholine as an allosteric activator for enzymatic activity. In Mesocricetus auratus (Golden hamster), this protein is D-beta-hydroxybutyrate dehydrogenase, mitochondrial.